A 179-amino-acid chain; its full sequence is Translationally-controlled tumor protein homolog (179 aa).

In terms of domain architecture, TCTP spans 1-179 (MIIYKDIISG…WKHGLEEMKV (179 aa)).

Belongs to the TCTP family.

The protein resides in the cytoplasm. Its subcellular location is the cytoskeleton. In terms of biological role, involved in protein synthesis. Involved in microtubule stabilization. In Aspergillus fumigatus (strain ATCC MYA-4609 / CBS 101355 / FGSC A1100 / Af293) (Neosartorya fumigata), this protein is Translationally-controlled tumor protein homolog.